An 891-amino-acid chain; its full sequence is Transportin-1 (891 aa).

19 HEAT repeats span residues 14–40 (GLRE…QQLQ), 45–83 (FPDF…ATFS), 92–125 (YVKS…IVRV), 131–168 (LFQA…LDVD), 178–208 (NVFM…QYIV), 221–248 (YLQG…VQLI), 260–287 (KNVT…FWSA), 303–381 (PRLI…LSNV), 389–420 (TLMP…GAIA), 432–459 (PQIV…TLSR), 477–510 (FDKI…EEEA), 518–551 (LGII…ADAV), 559–597 (KYLD…QALG), 605–653 (EPVF…GLGA), 664–695 (LRDI…RVCP), 703–740 (QEFL…IKIG), 748–784 (ITVV…WVCP), 792–825 (DHFM…VAAN), and 834–866 (TFIC…KQML). Residues 35 to 103 (IWQQLQHYSQ…KSELLPCIGA (69 aa)) enclose the Importin N-terminal domain. The span at 317–330 (DDDESLADAEEDES) shows a compositional bias: acidic residues. Positions 317-337 (DDDESLADAEEDESFPDRDQD) are disordered.

Belongs to the importin beta family. Importin beta-2 subfamily.

Its subcellular location is the cytoplasm. The protein localises to the nucleus. It is found in the nucleoplasm. In terms of biological role, functions in nuclear protein import as nuclear transport receptor. Serves as receptor for nuclear localization signals (NLS) in cargo substrates. Is thought to mediate docking of the importin/substrate complex to the nuclear pore complex (NPC) through binding to nucleoporin and the complex is subsequently translocated through the pore by an energy requiring, Ran-dependent mechanism. At the nucleoplasmic side of the NPC, Ran binds to the importin, the importin/substrate complex dissociates and importin is re-exported from the nucleus to the cytoplasm where GTP hydrolysis releases Ran. The directionality of nuclear import is thought to be conferred by an asymmetric distribution of the GTP- and GDP-bound forms of Ran between the cytoplasm and nucleus. The sequence is that of Transportin-1 (TRN1) from Oryza sativa subsp. japonica (Rice).